The sequence spans 152 residues: Putative pre-16S rRNA nuclease (152 aa).

It belongs to the YqgF nuclease family.

Its subcellular location is the cytoplasm. Could be a nuclease involved in processing of the 5'-end of pre-16S rRNA. This is Putative pre-16S rRNA nuclease from Bifidobacterium longum (strain DJO10A).